The sequence spans 275 residues: MELWFTEKQTKHFGITARINRTLHTEQTEFQKLDMVETEEFGNMLILDGMVMTTEKDEFVYHEMVAHVPLFTHPNPENVLIVGGGDGGVIREVLKHPSVKKATLVEIDGKVIEYSKQYLPSIAGALDNERVEVKVGDGFLHIAESENEYDVIMVDSTEPVGPAVNLFTKGFYAGISKALKEDGIFVAQTDNPWFTPELITTVFKDVKEIFPITRLYTANIPTYPSGLWTFTIGSKKHDPLEVIEERFHEIETKYYTKELHNAAFALPKFVGDLIK.

The PABS domain maps to 2-235; sequence ELWFTEKQTK…GLWTFTIGSK (234 aa). Gln-31 lines the S-methyl-5'-thioadenosine pocket. His-62 and Asp-86 together coordinate spermidine. S-methyl-5'-thioadenosine-binding positions include Glu-106 and 137-138; that span reads DG. Asp-155 (proton acceptor) is an active-site residue. 155–158 is a spermidine binding site; sequence DSTE. Pro-162 is an S-methyl-5'-thioadenosine binding site.

The protein belongs to the spermidine/spermine synthase family. In terms of assembly, homodimer or homotetramer.

It localises to the cytoplasm. The enzyme catalyses S-adenosyl 3-(methylsulfanyl)propylamine + putrescine = S-methyl-5'-thioadenosine + spermidine + H(+). It participates in amine and polyamine biosynthesis; spermidine biosynthesis; spermidine from putrescine: step 1/1. Its function is as follows. Catalyzes the irreversible transfer of a propylamine group from the amino donor S-adenosylmethioninamine (decarboxy-AdoMet) to putrescine (1,4-diaminobutane) to yield spermidine. This chain is Polyamine aminopropyltransferase 1, found in Bacillus cereus (strain ATCC 14579 / DSM 31 / CCUG 7414 / JCM 2152 / NBRC 15305 / NCIMB 9373 / NCTC 2599 / NRRL B-3711).